The sequence spans 140 residues: MRRERPELRDAEGRLRLRAGCLVTAWPRAPSGAGSWSMAAASPWPASWGFPDASSTVPSLCTEARAGRGGPATARSRVSADSQGGRAGSSSPSSALRLCCAGPSQAHPGPSPAVLPGRCGLLGSFPRPPAPQGRWGPSLG.

The segment at 62–140 (TEARAGRGGP…PQGRWGPSLG (79 aa)) is disordered. Over residues 71-94 (PATARSRVSADSQGGRAGSSSPSS) the composition is skewed to low complexity.

This is an uncharacterized protein from Homo sapiens (Human).